We begin with the raw amino-acid sequence, 113 residues long: UPF0482 protein YnfB (113 aa).

The signal sequence occupies residues 1–28 (MNILSGKLPFLLGAVFAGSVVLATSVQA).

Belongs to the UPF0482 family.

The protein is UPF0482 protein YnfB of Escherichia fergusonii (strain ATCC 35469 / DSM 13698 / CCUG 18766 / IAM 14443 / JCM 21226 / LMG 7866 / NBRC 102419 / NCTC 12128 / CDC 0568-73).